The primary structure comprises 595 residues: Adenine deaminase (595 aa).

This sequence belongs to the metallo-dependent hydrolases superfamily. Adenine deaminase family. Homodimer. Requires Mn(2+) as cofactor.

It carries out the reaction adenine + H2O + H(+) = hypoxanthine + NH4(+). The protein is Adenine deaminase of Serratia proteamaculans (strain 568).